Here is a 178-residue protein sequence, read N- to C-terminus: Caveolin-1 (178 aa).

Serine 2 is modified (N-acetylserine). Phosphoserine is present on serine 2. The interval 2-94 (SGGKYVDSEG…WKASFTTFTV (93 aa)) is required for homooligomerization. Over 2-104 (SGGKYVDSEG…TKYWFYRLLS (103 aa)) the chain is Cytoplasmic. Residue lysine 5 is modified to N6-acetyllysine; alternate. Lysine 5 is covalently cross-linked (Glycyl lysine isopeptide (Lys-Gly) (interchain with G-Cter in ubiquitin); alternate). The residue at position 6 (tyrosine 6) is a Phosphotyrosine. Phosphoserine is present on serine 9. Tyrosine 14 is modified (phosphotyrosine; by ABL1). A Phosphotyrosine modification is found at tyrosine 25. Residues lysine 26, lysine 30, lysine 39, lysine 47, and lysine 57 each participate in a glycyl lysine isopeptide (Lys-Gly) (interchain with G-Cter in ubiquitin) cross-link. The tract at residues 82–94 (DGIWKASFTTFTV) is interaction with CAVIN3. The helical intramembrane region spans 105–125 (ALFGIPMALIWGIYFAILSFL). Residues 126 to 178 (HIWAVVPCIKSFLIEIQCISRVYSIYVHTFCDPFFEAVGKIFSNIRINMQKEI) lie on the Cytoplasmic side of the membrane. Residues 131–142 (VPCIKSFLIEIQ) form an interacts with SPRY1, SPRY2, SPRY3 and SPRY4 region. 3 S-palmitoyl cysteine lipidation sites follow: cysteine 133, cysteine 143, and cysteine 156. The tract at residues 149 to 160 (SIYVHTFCDPFF) is interacts with SPRY1, SPRY2, and SPRY4. The tract at residues 167–178 (FSNIRINMQKEI) is interacts with SPRY1, SPRY2, SPRY3 and SPRY4.

The protein belongs to the caveolin family. Homooligomer. Interacts with GLIPR2. Interacts with NOSTRIN. Interacts with SNAP25 and STX1A. Interacts (via the N-terminus) with DPP4; the interaction is direct. Interacts with CTNNB1, CDH1 and JUP. Interacts with PACSIN2; this interaction induces membrane tubulation. Interacts with SLC7A9. Interacts with BMX and BTK. Interacts with TGFBR1. Interacts with CAVIN3 (via leucine-zipper domain) in a cholesterol-sensitive manner. Interacts with CAVIN1. Interacts with EHD2 in a cholesterol-dependent manner. Forms a ternary complex with UBXN6 and VCP; mediates CAV1 targeting to lysosomes for degradation. Interacts with ABCG1; this interaction regulates ABCG1-mediated cholesterol efflux. Interacts with NEU3; this interaction enhances NEU3 sialidase activity within caveola. Interacts (via C-terminus) with SPRY1, SPRY2 (via C-terminus), SPRY3, and SPRY4. Interacts with IGFBP5; this interaction allows trafficking of IGFBP5 from the plasma membrane to the nucleus. In terms of processing, phosphorylated at Tyr-14 by ABL1 in response to oxidative stress. Ubiquitinated. Undergo monoubiquitination and multi- and/or polyubiquitination. Monoubiquitination of N-terminal lysines promotes integration in a ternary complex with UBXN6 and VCP which promotes oligomeric CAV1 targeting to lysosomes for degradation. Ubiquitinated by ZNRF1; leading to degradation and modulation of the TLR4-mediated immune response.

The protein localises to the golgi apparatus membrane. It localises to the cell membrane. Its subcellular location is the membrane. It is found in the caveola. The protein resides in the membrane raft. Its function is as follows. May act as a scaffolding protein within caveolar membranes. Forms a stable heterooligomeric complex with CAV2 that targets to lipid rafts and drives caveolae formation. Mediates the recruitment of CAVIN proteins (CAVIN1/2/3/4) to the caveolae. Interacts directly with G-protein alpha subunits and can functionally regulate their activity. Involved in the costimulatory signal essential for T-cell receptor (TCR)-mediated T-cell activation. Its binding to DPP4 induces T-cell proliferation and NF-kappa-B activation in a T-cell receptor/CD3-dependent manner. Recruits CTNNB1 to caveolar membranes and may regulate CTNNB1-mediated signaling through the Wnt pathway. Negatively regulates TGFB1-mediated activation of SMAD2/3 by mediating the internalization of TGFBR1 from membrane rafts leading to its subsequent degradation. Binds 20(S)-hydroxycholesterol (20(S)-OHC). This chain is Caveolin-1 (CAV1), found in Felis catus (Cat).